The sequence spans 300 residues: Porphobilinogen deaminase (300 aa).

Cysteine 239 carries the S-(dipyrrolylmethanemethyl)cysteine modification.

This sequence belongs to the HMBS family. In terms of assembly, monomer. It depends on dipyrromethane as a cofactor.

The enzyme catalyses 4 porphobilinogen + H2O = hydroxymethylbilane + 4 NH4(+). It functions in the pathway porphyrin-containing compound metabolism; protoporphyrin-IX biosynthesis; coproporphyrinogen-III from 5-aminolevulinate: step 2/4. Tetrapolymerization of the monopyrrole PBG into the hydroxymethylbilane pre-uroporphyrinogen in several discrete steps. This Francisella tularensis subsp. holarctica (strain OSU18) protein is Porphobilinogen deaminase.